The sequence spans 261 residues: Probable electron transfer flavoprotein subunit beta (261 aa).

An N-acetylserine modification is found at Ser2.

Belongs to the ETF beta-subunit/FixA family. Heterodimer of an alpha and a beta subunit. Interacts with YFH1. FAD is required as a cofactor. AMP serves as cofactor.

It is found in the mitochondrion matrix. The electron transfer flavoprotein serves as a specific electron acceptor for several dehydrogenases, including five acyl-CoA dehydrogenases, glutaryl-CoA and sarcosine dehydrogenase. It transfers the electrons to the main mitochondrial respiratory chain via ETF-ubiquinone oxidoreductase (ETF dehydrogenase). This chain is Probable electron transfer flavoprotein subunit beta (CIR1), found in Saccharomyces cerevisiae (strain ATCC 204508 / S288c) (Baker's yeast).